The primary structure comprises 1218 residues: Cytosolic carboxypeptidase 1 (1218 aa).

Disordered stretches follow at residues 476 to 512 and 590 to 617; these read VVMK…RVAP and TEDD…PTLH. Over residues 477–499 the composition is skewed to basic and acidic residues; it reads VMKERASPKGEEAKEDPKGHDRT. The Peptidase M14 domain maps to 840–1130; that stretch reads YPYTYSTLQM…KFCVGLLRLK (291 aa). Residues H912, E915, and H1009 each contribute to the Zn(2+) site. E1094 functions as the Proton donor/acceptor in the catalytic mechanism. The residue at position 1160 (S1160) is a Phosphoserine. Residues 1193 to 1218 are disordered; sequence ENTGDYEPSAQEEALSDSEVSRTHLI.

The protein belongs to the peptidase M14 family. As to quaternary structure, interacts with MYLK. Zn(2+) serves as cofactor. As to expression, widely expressed. Highly expressed in the cerebellum and cortex of adult mouse brain. Expressed at similar levels in both the cerebellum and the cortex throughout all developmental stages. Also expressed in sciatic nerve transection, spinal motor neurons undergoing axon regeneration, testis, heart, eye, lung, pancreas, intestine, stomach, pituitary, spleen, adrenal, kidney and in developing brain. Expression in cranial motor nuclei is the same as that observed in uninjured primary motor neurons. Expression is prevalent in sensory neurons and hippocampal CA3 neurons in addition to regenerating motor neurons.

Its subcellular location is the cytoplasm. The protein localises to the cytosol. The protein resides in the nucleus. It is found in the mitochondrion. It catalyses the reaction (L-glutamyl)(n+1)-gamma-L-glutamyl-L-glutamyl-[protein] + H2O = (L-glutamyl)(n)-gamma-L-glutamyl-L-glutamyl-[protein] + L-glutamate. The catalysed reaction is C-terminal L-alpha-aminoacyl-L-glutamyl-L-glutamyl-[tubulin] + H2O = C-terminal L-alpha-aminoacyl-L-glutamyl-[tubulin] + L-glutamate. In terms of biological role, metallocarboxypeptidase that mediates protein deglutamylation of tubulin and non-tubulin target proteins. Catalyzes the removal of polyglutamate side chains present on the gamma-carboxyl group of glutamate residues within the C-terminal tail of alpha- and beta-tubulin. Specifically cleaves tubulin long-side-chains, while it is not able to remove the branching point glutamate. Also catalyzes the removal of polyglutamate residues from the carboxy-terminus of alpha-tubulin as well as non-tubulin proteins such as MYLK. Involved in KLF4 deglutamylation which promotes KLF4 proteasome-mediated degradation, thereby negatively regulating cell pluripotency maintenance and embryogenesis. The protein is Cytosolic carboxypeptidase 1 of Mus musculus (Mouse).